The sequence spans 807 residues: Spondin-1 (807 aa).

The N-terminal stretch at 1-28 is a signal peptide; it reads MRLSPAPLRLSRGPALLALALPLAAALA. The Reelin domain maps to 29–194; it reads FSDETLDKVA…DPTLDGVTDR (166 aa). Intrachain disulfides connect cysteine 44/cysteine 128, cysteine 156/cysteine 182, cysteine 199/cysteine 336, cysteine 200/cysteine 340, cysteine 202/cysteine 415, cysteine 443/cysteine 480, cysteine 454/cysteine 489, cysteine 459/cysteine 494, cysteine 502/cysteine 538, cysteine 513/cysteine 517, cysteine 548/cysteine 554, cysteine 559/cysteine 595, cysteine 570/cysteine 574, cysteine 605/cysteine 610, cysteine 615/cysteine 650, cysteine 626/cysteine 630, and cysteine 660/cysteine 665. In terms of domain architecture, Spondin spans 195-388; that stretch reads PILDCCACGT…LTSLDHPQSP (194 aa). N-linked (GlcNAc...) asparagine glycosylation is present at asparagine 214. Residues aspartate 325, aspartate 354, and aspartate 358 each contribute to the Ca(2+) site. 5 consecutive TSP type-1 domains span residues 442–495, 501–555, 558–611, 614–666, and 668–721; these read TCIY…PGCS, TCTM…EECS, SCLV…PECH, PCLL…PECP, and DCEL…RKCL. Asparagine 681 carries an N-linked (GlcNAc...) asparagine glycan. The segment covering 732–746 has biased composition (basic and acidic residues); that stretch reads REARESRRSEQLREE. The tract at residues 732-752 is disordered; that stretch reads REARESRRSEQLREESDGEQF. Residues 754–806 enclose the TSP type-1 6 domain; sequence GCRMRPWTAWSECTKLCGGGIQERYMTVKKRFKSSQFTSCKDKKEIRACNVHP.

As to quaternary structure, binds to the central extracellular domain of APP and inhibits beta-secretase cleavage of APP. Expressed at high levels in the floor plate.

The protein resides in the secreted. The protein localises to the extracellular space. Its subcellular location is the extracellular matrix. Its function is as follows. Cell adhesion protein that promotes the attachment of spinal cord and sensory neuron cells and the outgrowth of neurites in vitro. May contribute to the growth and guidance of axons in both the spinal cord and the PNS. In Rattus norvegicus (Rat), this protein is Spondin-1 (Spon1).